The sequence spans 570 residues: Urease subunit alpha (570 aa).

In terms of domain architecture, Urease spans 131–570; the sequence is GGIDSHIHFI…LPMTQRYFLF (440 aa). 3 residues coordinate Ni(2+): histidine 136, histidine 138, and lysine 219. N6-carboxylysine is present on lysine 219. Histidine 221 is a binding site for substrate. Ni(2+) contacts are provided by histidine 248 and histidine 274. Residue histidine 322 is the Proton donor of the active site. Residue aspartate 362 coordinates Ni(2+).

The protein belongs to the metallo-dependent hydrolases superfamily. Urease alpha subunit family. As to quaternary structure, heterotrimer of UreA (gamma), UreB (beta) and UreC (alpha) subunits. Three heterotrimers associate to form the active enzyme. The cofactor is Ni cation. In terms of processing, carboxylation allows a single lysine to coordinate two nickel ions.

The protein localises to the cytoplasm. The catalysed reaction is urea + 2 H2O + H(+) = hydrogencarbonate + 2 NH4(+). It participates in nitrogen metabolism; urea degradation; CO(2) and NH(3) from urea (urease route): step 1/1. This chain is Urease subunit alpha, found in Trichodesmium erythraeum (strain IMS101).